A 116-amino-acid chain; its full sequence is Large ribosomal subunit protein bL20 (116 aa).

This sequence belongs to the bacterial ribosomal protein bL20 family.

In terms of biological role, binds directly to 23S ribosomal RNA and is necessary for the in vitro assembly process of the 50S ribosomal subunit. It is not involved in the protein synthesizing functions of that subunit. The polypeptide is Large ribosomal subunit protein bL20 (Picosynechococcus sp. (strain ATCC 27264 / PCC 7002 / PR-6) (Agmenellum quadruplicatum)).